The sequence spans 173 residues: NADH-ubiquinone oxidoreductase chain 6 (173 aa).

The next 5 membrane-spanning stretches (helical) occupy residues 1–21 (MTYF…AVAS), 27–47 (YGVV…LSLG), 48–68 (VSFV…VVFV), 87–107 (VVGY…IGGF), and 139–159 (CGVG…FVVL).

This sequence belongs to the complex I subunit 6 family.

The protein resides in the mitochondrion membrane. The enzyme catalyses a ubiquinone + NADH + 5 H(+)(in) = a ubiquinol + NAD(+) + 4 H(+)(out). Functionally, core subunit of the mitochondrial membrane respiratory chain NADH dehydrogenase (Complex I) that is believed to belong to the minimal assembly required for catalysis. Complex I functions in the transfer of electrons from NADH to the respiratory chain. The immediate electron acceptor for the enzyme is believed to be ubiquinone. The polypeptide is NADH-ubiquinone oxidoreductase chain 6 (MT-ND6) (Cepphus columba (Pigeon guillemot)).